The primary structure comprises 428 residues: Cytochrome bc complex cytochrome b subunit (428 aa).

2 stretches are compositionally biased toward low complexity: residues Met-1–Ala-15 and Ala-21–Pro-52. The segment at Met-1–Ser-72 is disordered. A compositionally biased stretch (basic and acidic residues) spans Pro-59–Ser-72. Residues Tyr-110 to Leu-130 traverse the membrane as a helical segment. Residues His-161 and His-175 each contribute to the heme b site. Transmembrane regions (helical) follow at residues Ala-162–Met-182, Trp-193–Leu-213, Leu-260–Val-280, Gly-312–Trp-331, Glu-369–Ile-389, and Ile-401–Tyr-421. 2 residues coordinate heme b: His-261 and His-276.

This sequence belongs to the cytochrome b family. Requires heme b as cofactor.

It is found in the cell inner membrane. Its function is as follows. Component of the green S-bacteria bc complex, which consists of the Rieske protein and cytochrome b subunit but appears to lack a cytochrome c1-equivalent. This complex has a comparatively low redox potential. The protein is Cytochrome bc complex cytochrome b subunit (petB) of Chlorobaculum thiosulfatiphilum (Chlorobium limicola f.sp. thiosulfatophilum).